Reading from the N-terminus, the 563-residue chain is Delta-1-pyrroline-5-carboxylate dehydrogenase, mitochondrial (563 aa).

The N-terminal 24 residues, 1–24, are a transit peptide targeting the mitochondrion; the sequence is MLLRSAALCRALLARRGRAAGLCR. A Phosphoserine modification is found at S44. K52 is modified (N6-acetyllysine). 5 positions are modified to N6-acetyllysine; alternate: K93, K99, K114, K130, and K175. Residues K93, K99, K114, K130, and K175 each carry the N6-succinyllysine; alternate modification. Residues S208, K233, and 286-290 contribute to the NAD(+) site; that span reads GSVPT. Catalysis depends on E314, which acts as the Proton acceptor. The residue at position 318 (K318) is an N6-acetyllysine. K347 carries the post-translational modification N6-succinyllysine. The active-site Nucleophile is C348. N6-acetyllysine occurs at positions 365 and 376. At K395 the chain carries N6-succinyllysine. An NAD(+)-binding site is contributed by E447. Position 509 is an N6-acetyllysine; alternate (K509). Position 509 is an N6-succinyllysine; alternate (K509). S513 provides a ligand contact to substrate. K531 bears the N6-acetyllysine mark.

Belongs to the aldehyde dehydrogenase family. As to quaternary structure, homodimer.

It is found in the mitochondrion matrix. The enzyme catalyses L-glutamate 5-semialdehyde + NAD(+) + H2O = L-glutamate + NADH + 2 H(+). It functions in the pathway amino-acid degradation; L-proline degradation into L-glutamate; L-glutamate from L-proline: step 2/2. In terms of biological role, irreversible conversion of delta-1-pyrroline-5-carboxylate (P5C), derived either from proline or ornithine, to glutamate. This is a necessary step in the pathway interconnecting the urea and tricarboxylic acid cycles. The preferred substrate is glutamic gamma-semialdehyde, other substrates include succinic, glutaric and adipic semialdehydes. The protein is Delta-1-pyrroline-5-carboxylate dehydrogenase, mitochondrial (ALDH4A1) of Bos taurus (Bovine).